The sequence spans 809 residues: F-BAR domain only protein 2 (809 aa).

Residues 3 to 250 (MAHFVENFWG…NMANTTIESL (248 aa)) enclose the F-BAR domain. The interval 3–274 (MAHFVENFWG…PGLIEFEECD (272 aa)) is mediates dimerization and binding to membranes enriched in Pi(4,5)-P2 and induces their tubulation. Positions 87-156 (HLDLVRKLQE…CVEQERLKKE (70 aa)) form a coiled coil. Lysine 297 participates in a covalent cross-link: Glycyl lysine isopeptide (Lys-Gly) (interchain with G-Cter in SUMO2). The tract at residues 301 to 352 (DAESVECPDADSLNIPDVDEEGFSIKPEANQNDTKENHFYSSSDSDSEDEEP) is disordered. Position 312 is a phosphoserine (serine 312). Threonine 385 is subject to Phosphothreonine. Phosphoserine is present on residues serine 387, serine 394, serine 402, and serine 403. The segment covering 390 to 416 (VSRHSPVQMNRNSSNEELTKSKPSSLP) has biased composition (polar residues). Disordered regions lie at residues 390 to 422 (VSRHSPVQMNRNSSNEELTKSKPSSLPTEKGTN) and 435 to 536 (LESS…PVSL). The span at 435–456 (LESSSAPLTSSSSARPTTPLSL) shows a compositional bias: low complexity. Serine 487, serine 492, serine 495, serine 507, serine 509, serine 510, and serine 532 each carry phosphoserine. Low complexity predominate over residues 501 to 520 (PLARAESSSSISSSASLSAA). The segment at 520-809 (ANTPTVGVSR…FATGRYLADC (290 aa)) is mediates interaction with DAB2, EPS15, EPS15R and ITSN1. One can recognise an MHD domain in the interval 541-808 (TLPVAIALTE…RFATGRYLAD (268 aa)).

It belongs to the FCHO family. As to quaternary structure, homodimer; disulfide-linked. May form homotetramer. Interacts with AP2A1. Interacts with EPS15, EPS15R, ITSN1 and ITSN2; recruit those scaffolding proteins which in turn may interact with the adaptor protein complex AP-2 at the plasma membrane. Interacts with DAB2 (via DPF motifs); mediates LDL receptor/LDLR endocytosis. Ubiquitinated. Mainly undergoes monoubiquitination but also polyubiquitination. Ubiquitously expressed (at protein level).

The protein resides in the membrane. The protein localises to the clathrin-coated pit. Its function is as follows. Functions in an early step of clathrin-mediated endocytosis. Has both a membrane binding/bending activity and the ability to recruit proteins essential to the formation of functional clathrin-coated pits. Has a lipid-binding activity with a preference for membranes enriched in phosphatidylserine and phosphoinositides (Pi(4,5) biphosphate) like the plasma membrane. Its membrane-bending activity might be important for the subsequent action of clathrin and adaptors in the formation of clathrin-coated vesicles. Involved in adaptor protein complex AP-2-dependent endocytosis of the transferrin receptor, it also functions in the AP-2-independent endocytosis of the LDL receptor. The sequence is that of F-BAR domain only protein 2 (Fcho2) from Mus musculus (Mouse).